Reading from the N-terminus, the 233-residue chain is Small ribosomal subunit protein uS2 (233 aa).

This sequence belongs to the universal ribosomal protein uS2 family.

The sequence is that of Small ribosomal subunit protein uS2 from Prochlorococcus marinus (strain MIT 9312).